Consider the following 1137-residue polypeptide: Isoleucine--tRNA ligase (1137 aa).

The 'HIGH' region motif lies at P50–H60. The short motif at K688–R692 is the 'KMSKS' region element. K691 contributes to the ATP binding site.

Belongs to the class-I aminoacyl-tRNA synthetase family. IleS type 2 subfamily. Monomer. It depends on Zn(2+) as a cofactor.

It is found in the cytoplasm. The enzyme catalyses tRNA(Ile) + L-isoleucine + ATP = L-isoleucyl-tRNA(Ile) + AMP + diphosphate. In terms of biological role, catalyzes the attachment of isoleucine to tRNA(Ile). As IleRS can inadvertently accommodate and process structurally similar amino acids such as valine, to avoid such errors it has two additional distinct tRNA(Ile)-dependent editing activities. One activity is designated as 'pretransfer' editing and involves the hydrolysis of activated Val-AMP. The other activity is designated 'posttransfer' editing and involves deacylation of mischarged Val-tRNA(Ile). This Porphyromonas gingivalis (strain ATCC BAA-308 / W83) protein is Isoleucine--tRNA ligase.